We begin with the raw amino-acid sequence, 96 residues long: Small ribosomal subunit protein uS19 (96 aa).

The protein belongs to the universal ribosomal protein uS19 family.

Functionally, protein S19 forms a complex with S13 that binds strongly to the 16S ribosomal RNA. The protein is Small ribosomal subunit protein uS19 of Solibacter usitatus (strain Ellin6076).